We begin with the raw amino-acid sequence, 304 residues long: Myelin basic protein (304 aa).

2 stretches are compositionally biased toward basic and acidic residues: residues 1 to 12 (MGNHAGKRELNA) and 22 to 32 (NRGESEKKRNL). Positions 1–146 (MGNHAGKREL…QKRPSQRHGS (146 aa)) are disordered. Residue Gly-2 is modified to N-acetylalanine. Positions 51–65 (ANQNNGTSSQDTAVT) are enriched in polar residues. The span at 95–113 (FSRDAPGREDNTFKDRPSE) shows a compositional bias: basic and acidic residues. A Phosphoserine modification is found at Ser-96. Over residues 117–130 (LQTIQEDSAATSES) the composition is skewed to polar residues. Phosphoserine is present on residues Ser-141 and Ser-146. A Phosphotyrosine modification is found at Tyr-148. At Thr-151 the chain carries Phosphothreonine. Residue Ser-153 is modified to Phosphoserine. Thr-154 bears the Phosphothreonine mark. Citrulline; in form C8 occurs at positions 159 and 165. Position 167 is a citrulline (Arg-167). The residue at position 169 (Thr-169) is a Phosphothreonine. Ser-174 carries the phosphoserine modification. Omega-N-methylarginine is present on residues Arg-177 and Arg-183. Residues 179 to 222 (FGGDRGAPKRGSGKDSHHPARTAHYGSLPQKSHGRTQDENPVVH) are induces experimental autoimmune encephalomyelitis (EAE) 1. A disordered region spans residues 180 to 249 (GGDRGAPKRG…GRGLSLSRFS (70 aa)). Ser-190 carries the phosphoserine modification. Arg-199 is modified (citrulline). Tyr-203 is subject to Phosphotyrosine. Ser-210 is subject to Phosphoserine. Residues Thr-214 and Thr-229 each carry the phosphothreonine modification. The residue at position 231 (Arg-231) is a Citrulline. Thr-232 bears the Phosphothreonine mark. Gln-237 bears the Deamidated glutamine mark. Arg-241 bears the Omega-N-methylarginine; alternate mark. Arg-241 carries the symmetric dimethylarginine; alternate modification. The interval 246–256 (SRFSWGAEGQR) is induces experimental autoimmune encephalomyelitis (EAE) 2. Ser-249 carries the phosphoserine modification. A citrulline; in form C8 mark is found at Arg-256 and Arg-264. At Gln-281 the chain carries Deamidated glutamine. At Arg-293 the chain carries Citrulline; in form C8. Residue Ser-295 is modified to Phosphoserine. At Arg-296 the chain carries Citrulline. Position 299 is a phosphoserine; by UHMK1 (Ser-299). The residue at position 303 (Arg-303) is a Citrulline. Citrulline; in form C8 is present on Arg-304.

The protein belongs to the myelin basic protein family. Homodimer. Isoform 3 exists as a homodimer. Post-translationally, several charge isomers of MBP; C1 (the most cationic, least modified, and most abundant form), C2, C3, C4, C5, C6, C7, C8-A and C8-B (the least cationic form); are produced as a result of optional PTM, such as phosphorylation, deamidation of glutamine or asparagine, arginine citrullination and methylation. C8-A and C8-B contain each two mass isoforms termed C8-A(H), C8-A(L), C8-B(H) and C8-B(L), (H) standing for higher and (L) for lower molecular weight. C3, C4 and C5 are phosphorylated. The ratio of methylated arginine residues decreases during aging, making the protein more cationic. In terms of processing, the N-terminal alanine is acetylated (isoform 3, isoform 4, isoform 5 and isoform 6). Arg-241 was found to be 6% monomethylated and 60% symmetrically dimethylated. Post-translationally, proteolytically cleaved in B cell lysosomes by cathepsin CTSG which degrades the major immunogenic MBP epitope and prevents the activation of MBP-specific autoreactive T cells. In terms of processing, phosphorylated by TAOK2, VRK2, MAPK11, MAPK12, MAPK14 and MINK1. As to expression, MBP isoforms are found in both the central and the peripheral nervous system, whereas Golli-MBP isoforms are expressed in fetal thymus, spleen and spinal cord, as well as in cell lines derived from the immune system.

Its subcellular location is the myelin membrane. It is found in the nucleus. The classic group of MBP isoforms (isoform 4-isoform 14) are with PLP the most abundant protein components of the myelin membrane in the CNS. They have a role in both its formation and stabilization. The smaller isoforms might have an important role in remyelination of denuded axons in multiple sclerosis. The non-classic group of MBP isoforms (isoform 1-isoform 3/Golli-MBPs) may preferentially have a role in the early developing brain long before myelination, maybe as components of transcriptional complexes, and may also be involved in signaling pathways in T-cells and neural cells. Differential splicing events combined with optional post-translational modifications give a wide spectrum of isomers, with each of them potentially having a specialized function. Induces T-cell proliferation. This is Myelin basic protein (MBP) from Homo sapiens (Human).